A 179-amino-acid polypeptide reads, in one-letter code: Large ribosomal subunit protein uL6 (179 aa).

This sequence belongs to the universal ribosomal protein uL6 family. As to quaternary structure, part of the 50S ribosomal subunit.

Functionally, this protein binds to the 23S rRNA, and is important in its secondary structure. It is located near the subunit interface in the base of the L7/L12 stalk, and near the tRNA binding site of the peptidyltransferase center. This Treponema pallidum (strain Nichols) protein is Large ribosomal subunit protein uL6.